We begin with the raw amino-acid sequence, 100 residues long: Large ribosomal subunit protein eL36B (100 aa).

This sequence belongs to the eukaryotic ribosomal protein eL36 family. In terms of assembly, component of the large ribosomal subunit (LSU). Mature yeast ribosomes consist of a small (40S) and a large (60S) subunit. The 40S small subunit contains 1 molecule of ribosomal RNA (18S rRNA) and 33 different proteins (encoded by 57 genes). The large 60S subunit contains 3 rRNA molecules (25S, 5.8S and 5S rRNA) and 46 different proteins (encoded by 81 genes).

It is found in the cytoplasm. Its function is as follows. Component of the ribosome, a large ribonucleoprotein complex responsible for the synthesis of proteins in the cell. The small ribosomal subunit (SSU) binds messenger RNAs (mRNAs) and translates the encoded message by selecting cognate aminoacyl-transfer RNA (tRNA) molecules. The large subunit (LSU) contains the ribosomal catalytic site termed the peptidyl transferase center (PTC), which catalyzes the formation of peptide bonds, thereby polymerizing the amino acids delivered by tRNAs into a polypeptide chain. The nascent polypeptides leave the ribosome through a tunnel in the LSU and interact with protein factors that function in enzymatic processing, targeting, and the membrane insertion of nascent chains at the exit of the ribosomal tunnel. The chain is Large ribosomal subunit protein eL36B from Saccharomyces cerevisiae (strain ATCC 204508 / S288c) (Baker's yeast).